A 209-amino-acid polypeptide reads, in one-letter code: Small ribosomal subunit protein uS4 (209 aa).

One can recognise an S4 RNA-binding domain in the interval 98–164; that stretch reads RRLDNVVYRL…LPVKNAIELN (67 aa).

Belongs to the universal ribosomal protein uS4 family. Part of the 30S ribosomal subunit. Contacts protein S5. The interaction surface between S4 and S5 is involved in control of translational fidelity.

Functionally, one of the primary rRNA binding proteins, it binds directly to 16S rRNA where it nucleates assembly of the body of the 30S subunit. In terms of biological role, with S5 and S12 plays an important role in translational accuracy. This chain is Small ribosomal subunit protein uS4, found in Thermosipho africanus (strain TCF52B).